Consider the following 89-residue polypeptide: Defensin-like protein 103 (89 aa).

The signal sequence occupies residues 1 to 24; that stretch reads MAITRKNLVAFCFTILFIISSIHC. 4 cysteine pairs are disulfide-bonded: cysteine 46–cysteine 84, cysteine 52–cysteine 75, cysteine 61–cysteine 82, and cysteine 65–cysteine 83.

The protein belongs to the DEFL family.

It is found in the secreted. The sequence is that of Defensin-like protein 103 from Arabidopsis thaliana (Mouse-ear cress).